Here is a 380-residue protein sequence, read N- to C-terminus: Cytochrome b (380 aa).

Transmembrane regions (helical) follow at residues 34–54, 78–99, 114–134, and 179–199; these read FGSL…LLAT, WLIR…YLHI, WNTG…GYVL, and FFAL…IHLT. Heme b is bound by residues His84 and His98. The heme b site is built by His183 and His197. His202 provides a ligand contact to a ubiquinone. A run of 4 helical transmembrane segments spans residues 227-247, 289-309, 321-341, and 348-368; these read LKDI…ALFS, LGGV…PLLH, FSQF…WVGS, and FIII…LLFP.

It belongs to the cytochrome b family. As to quaternary structure, the cytochrome bc1 complex contains 11 subunits: 3 respiratory subunits (MT-CYB, CYC1 and UQCRFS1), 2 core proteins (UQCRC1 and UQCRC2) and 6 low-molecular weight proteins (UQCRH/QCR6, UQCRB/QCR7, UQCRQ/QCR8, UQCR10/QCR9, UQCR11/QCR10 and a cleavage product of UQCRFS1). This cytochrome bc1 complex then forms a dimer. Heme b serves as cofactor.

It localises to the mitochondrion inner membrane. Component of the ubiquinol-cytochrome c reductase complex (complex III or cytochrome b-c1 complex) that is part of the mitochondrial respiratory chain. The b-c1 complex mediates electron transfer from ubiquinol to cytochrome c. Contributes to the generation of a proton gradient across the mitochondrial membrane that is then used for ATP synthesis. The sequence is that of Cytochrome b (MT-CYB) from Alle alle (Dovekie).